We begin with the raw amino-acid sequence, 354 residues long: MIDRLEKIQEKYLRISEELNQAKDPSSLKNLYKERSRLTPLYLKVEEYLKIYKDRKDAEELIQSEKDEEMHSMLKEEIREANLKLETLEREFEILLLPPDPNSGKNILVEIRAGTGGEEAGLFVADLFRMYSKFADKQKIKTEIIDSSPTGIGGLKEIIFALEDDRAYDLFKFEGGTHRVQRIPSTESGGRIHTSAVTVAVLPEADEEEVQINESDLRIDVYRSSGAGGQHVNTTDSAVRITHIPTGVVVACQDEKSQHKNKAKALRILSARILEKQAEDKKQASDAIKKQMIGSGDRSERVRTYNFPQGRCTDHRIGFTSHNLSAIMEGDLDELIGALTEEDRVRKISETQTH.

Gln230 is subject to N5-methylglutamine.

The protein belongs to the prokaryotic/mitochondrial release factor family. Methylated by PrmC. Methylation increases the termination efficiency of RF1.

It is found in the cytoplasm. Its function is as follows. Peptide chain release factor 1 directs the termination of translation in response to the peptide chain termination codons UAG and UAA. This Leptospira interrogans serogroup Icterohaemorrhagiae serovar copenhageni (strain Fiocruz L1-130) protein is Peptide chain release factor 1.